We begin with the raw amino-acid sequence, 548 residues long: DNA ligase (548 aa).

E244 is a binding site for ATP. The active-site N6-AMP-lysine intermediate is the K246. The ATP site is built by R251, R266, E295, F334, R405, and K411.

This sequence belongs to the ATP-dependent DNA ligase family. Mg(2+) serves as cofactor.

It catalyses the reaction ATP + (deoxyribonucleotide)n-3'-hydroxyl + 5'-phospho-(deoxyribonucleotide)m = (deoxyribonucleotide)n+m + AMP + diphosphate.. Its function is as follows. DNA ligase that seals nicks in double-stranded DNA during DNA replication, DNA recombination and DNA repair. This chain is DNA ligase, found in Methanoculleus marisnigri (strain ATCC 35101 / DSM 1498 / JR1).